The primary structure comprises 433 residues: MTATWEKKEGNEGLLTVTVPAEKVNKALDQAFKKVVKQINVPGFRKGKVPRPIFEQRFGVEALYQDAIDILLPDAYGEAIDETDIKPVAQPEVSVTQIEKGKDFIFEATVTVEPEVKLGDYKGLEIEKQETELSDDELQEAIDHSLGHLAEMVVKEDGVVENGDTVNIDFSGSVDGEEFEGGQAEGYDLEIGSGSFIPGFEEQLEGMKVDEEKDVVVTFPEEYHAEELAGKEATFKTKVNEIKFKEVPELTDEIANELDAEANTVDEYKENLRKRLAEQKATDAENVEKEEAITKATDNTTIDIPEAMVNTELDRMVSEFAQRIQQQGLDLQTYFQISGQDESQLREQMKDDAEQRVKTNLTLTAIAEAEKIEATDEDIDKELEKMSKQFNISVEDIKNTLGNTDIIKNDVRIQKVIDLLRDNAKFVEGTKED.

The 86-residue stretch at 163–248 (GDTVNIDFSG…VNEIKFKEVP (86 aa)) folds into the PPIase FKBP-type domain.

This sequence belongs to the FKBP-type PPIase family. Tig subfamily.

The protein resides in the cytoplasm. The catalysed reaction is [protein]-peptidylproline (omega=180) = [protein]-peptidylproline (omega=0). Functionally, involved in protein export. Acts as a chaperone by maintaining the newly synthesized protein in an open conformation. Functions as a peptidyl-prolyl cis-trans isomerase. The protein is Trigger factor of Staphylococcus aureus (strain bovine RF122 / ET3-1).